The primary structure comprises 250 residues: Methionine aminopeptidase (250 aa).

A substrate-binding site is contributed by His77. A divalent metal cation is bound by residues Asp94, Asp105, and His169. His176 is a binding site for substrate. Glu202 and Glu235 together coordinate a divalent metal cation.

It belongs to the peptidase M24A family. Methionine aminopeptidase type 1 subfamily. In terms of assembly, monomer. Co(2+) is required as a cofactor. The cofactor is Zn(2+). It depends on Mn(2+) as a cofactor. Fe(2+) serves as cofactor.

It carries out the reaction Release of N-terminal amino acids, preferentially methionine, from peptides and arylamides.. Removes the N-terminal methionine from nascent proteins. The N-terminal methionine is often cleaved when the second residue in the primary sequence is small and uncharged (Met-Ala-, Cys, Gly, Pro, Ser, Thr, or Val). Requires deformylation of the N(alpha)-formylated initiator methionine before it can be hydrolyzed. The sequence is that of Methionine aminopeptidase from Mycoplasmoides gallisepticum (strain R(low / passage 15 / clone 2)) (Mycoplasma gallisepticum).